Here is a 533-residue protein sequence, read N- to C-terminus: Glucose-6-phosphate exchanger SLC37A1 (533 aa).

A helical transmembrane segment spans residues 18–38 (QWYRAFIFILTFLLYASFHLS). The N-linked (GlcNAc...) asparagine glycan is linked to Asn-81. The next 4 helical transmembrane spans lie at 100–120 (GALDYSFLCAYAVGMYLSGII), 129–149 (YLTFGMLASGAFTALFGLGYF), 157–177 (FYVVTQVINGLVQTTGWPSVV), and 222–242 (SFVVPGAIVAAMGIVCFLFLI). Residue Asn-263 is glycosylated (N-linked (GlcNAc...) asparagine). 7 helical membrane passes run 304–324 (VVILPGDGGSGTAAISFTGAL), 334–354 (LCLLFAKLVSYTFLFWLPLYI), 366–386 (GELSTLFDVGGIFGGILAGVI), 394–414 (ASTCGLMLLLAAPTLYIFSTV), 423–443 (IAMLLLSGALVSGPYTLITTA), 466–486 (AIIDGTGSVGAALGPLLAGLL), and 490–510 (GWSNVFYMLMFADACALLFLI).

This sequence belongs to the major facilitator superfamily. Organophosphate:Pi antiporter (OPA) (TC 2.A.1.4) family. Expressed in numerous tissues, with highest expression in pancreas, kidney, bone marrow, spleen, liver, small intestine, as well as in fetal brain, liver and spleen.

The protein localises to the endoplasmic reticulum membrane. It carries out the reaction D-glucose 6-phosphate(in) + phosphate(out) = D-glucose 6-phosphate(out) + phosphate(in). Inhibited by vanadate but not by chlorogenic acid. Functionally, inorganic phosphate and glucose-6-phosphate antiporter. May transport cytoplasmic glucose-6-phosphate into the lumen of the endoplasmic reticulum and translocate inorganic phosphate into the opposite direction. Independent of a lumenal glucose-6-phosphatase. May not play a role in homeostatic regulation of blood glucose levels. The chain is Glucose-6-phosphate exchanger SLC37A1 from Homo sapiens (Human).